Reading from the N-terminus, the 404-residue chain is Probable sugar efflux transporter (404 aa).

12 helical membrane-spanning segments follow: residues 15–35 (VITF…PVAL), 51–71 (GLII…FMLL), 85–105 (LVLF…WVLV), 109–129 (IGVA…VIRV), 137–157 (QAIG…LPLG), 168–188 (ATFA…YQLL), 209–229 (PLLL…FTAY), 245–265 (SMAT…SLLF), 276–296 (FILF…IASQ), 299–319 (WTMF…GLGL), 333–353 (VAMA…ALLG), and 363–383 (AYIG…FILV).

This sequence belongs to the major facilitator superfamily. SotB (TC 2.A.1.2) family.

It is found in the cell inner membrane. Functionally, involved in the efflux of sugars. The physiological role may be the reduction of the intracellular concentration of toxic sugars or sugar metabolites. This Pasteurella multocida (strain Pm70) protein is Probable sugar efflux transporter.